A 394-amino-acid chain; its full sequence is uncharacterized protein (394 aa).

This sequence belongs to the mycobacterial PPE family.

This is an uncharacterized protein from Mycobacterium tuberculosis (strain CDC 1551 / Oshkosh).